A 248-amino-acid chain; its full sequence is Probable transcriptional regulatory protein LAR_0538 (248 aa).

Positions 1–22 are disordered; sequence MSGHSKWHNIQGRKNAQDAKRG.

It belongs to the TACO1 family.

The protein localises to the cytoplasm. In Limosilactobacillus reuteri subsp. reuteri (strain JCM 1112) (Lactobacillus reuteri), this protein is Probable transcriptional regulatory protein LAR_0538.